The primary structure comprises 290 residues: tRNA-cytidine(32) 2-sulfurtransferase (290 aa).

The PP-loop motif motif lies at 36–41 (SGGKDS). Residues Cys-111, Cys-114, and Cys-202 each contribute to the [4Fe-4S] cluster site. Residues 259–290 (DPWLDAEDEEAEDCGEPAGDGVVSLGGARGGR) are disordered. The span at 262 to 273 (LDAEDEEAEDCG) shows a compositional bias: acidic residues.

Belongs to the TtcA family. Homodimer. Mg(2+) is required as a cofactor. It depends on [4Fe-4S] cluster as a cofactor.

It localises to the cytoplasm. The catalysed reaction is cytidine(32) in tRNA + S-sulfanyl-L-cysteinyl-[cysteine desulfurase] + AH2 + ATP = 2-thiocytidine(32) in tRNA + L-cysteinyl-[cysteine desulfurase] + A + AMP + diphosphate + H(+). It functions in the pathway tRNA modification. Catalyzes the ATP-dependent 2-thiolation of cytidine in position 32 of tRNA, to form 2-thiocytidine (s(2)C32). The sulfur atoms are provided by the cysteine/cysteine desulfurase (IscS) system. The polypeptide is tRNA-cytidine(32) 2-sulfurtransferase (Anaeromyxobacter dehalogenans (strain 2CP-C)).